A 741-amino-acid chain; its full sequence is Pentatricopeptide repeat-containing protein At1g08070, chloroplastic (741 aa).

PPR repeat units lie at residues 98–132 (NLLIWNTMFRGHALSSDPVSALKLYVCMISLGLLP), 133–167 (NSYTFPFVLKSCAKSKAFKEGQQIHGHVLKLGCDL), 168–202 (DLYVHTSLISMYVQNGRLEDAHKVFDKSPHRDVVS), 203–229 (YTALIKGYASRGYIENAQKLFDEIPVK), 230–264 (DVVSWNAMISGYAETGNYKEALELFKDMMKTNVRP), 265–299 (DESTMVTVVSACAQSGSIELGRQVHLWIDDHGFGS), 300–330 (NLKIVNALIDLYSKCGELETACGLFERLPYK), 331–365 (DVISWNTLIGGYTHMNLYKEALLLFQEMLRSGETP), 366–396 (NDVTMLSILPACAHLGAIDIGRWIHVYIDKR), 403–433 (ASSLRTSLIDMYAKCGDIEAAHQVFNSILHK), 434–468 (SLSSWNAMIFGFAMHGRADASFDLFSRMRKIGIQP), 469–499 (DDITFVGLLSACSHSGMLDLGRHIFRTMTQD), and 505–535 (KLEHYGCMIDLLGHSGLFKEAEEMINMMEME). The interval 540-615 (IWCSLLKACK…VPGCSSIEID (76 aa)) is type E motif. Positions 616–646 (SVVHEFIIGDKFHPRNREIYGMLEEMEVLLE) are type E(+) motif. The segment at 647–741 (KAGFVPDTSE…DGVCSCNDYW (95 aa)) is type DYW motif.

The protein belongs to the PPR family. PCMP-H subfamily. In terms of assembly, interacts with ORRM1. Interacts with VAR3/OZ1.

The protein resides in the plastid. The protein localises to the chloroplast. Its function is as follows. Involved in multiple sites RNA editing events in chloroplasts. Involved in the editing of the site 9 of ndhB (ndhB-9) and site 1 of ndhG (ndhG-1) transcripts, which are two plastid-encoded subunits of the chloroplast NAD(P)H dehydrogenase (NDH) complex. Not essential for the activity of the NDH complex of the photosynthetic electron transport chain. The sequence is that of Pentatricopeptide repeat-containing protein At1g08070, chloroplastic (PCMP-H12) from Arabidopsis thaliana (Mouse-ear cress).